We begin with the raw amino-acid sequence, 887 residues long: Bifunctional uridylyltransferase/uridylyl-removing enzyme (887 aa).

The uridylyltransferase stretch occupies residues 1–337; sequence MINTSPLLNY…RLPNYERKIE (337 aa). Residues 339–699 form a uridylyl-removing region; the sequence is VNDHFKIVDN…AHRKAAQDAV (361 aa). Residues 457 to 579 enclose the HD domain; the sequence is VDAHTLLLLR…LGDMEHLDYL (123 aa). ACT domains follow at residues 700–782 and 809–887; these read QIFI…LMQR and MVEI…ICQH.

It belongs to the GlnD family. Mg(2+) is required as a cofactor.

It catalyses the reaction [protein-PII]-L-tyrosine + UTP = [protein-PII]-uridylyl-L-tyrosine + diphosphate. The catalysed reaction is [protein-PII]-uridylyl-L-tyrosine + H2O = [protein-PII]-L-tyrosine + UMP + H(+). With respect to regulation, uridylyltransferase (UTase) activity is inhibited by glutamine, while glutamine activates uridylyl-removing (UR) activity. In terms of biological role, modifies, by uridylylation and deuridylylation, the PII regulatory proteins (GlnB and homologs), in response to the nitrogen status of the cell that GlnD senses through the glutamine level. Under low glutamine levels, catalyzes the conversion of the PII proteins and UTP to PII-UMP and PPi, while under higher glutamine levels, GlnD hydrolyzes PII-UMP to PII and UMP (deuridylylation). Thus, controls uridylylation state and activity of the PII proteins, and plays an important role in the regulation of nitrogen assimilation and metabolism. This is Bifunctional uridylyltransferase/uridylyl-removing enzyme from Acinetobacter baumannii (strain ACICU).